Reading from the N-terminus, the 238-residue chain is MORN repeat-containing protein 3 (238 aa).

MORN repeat units follow at residues 38 to 60 (YTGE…RRKS), 62 to 84 (YEGD…DSNT), 91 to 113 (YSGY…AKEY), 114 to 136 (YEGE…NGDI), 137 to 159 (YEGE…NENR), 160 to 182 (YEGS…NKGQ), and 184 to 205 (YEGV…GRTE).

It is found in the cytoplasmic vesicle. The protein resides in the secretory vesicle. The protein localises to the acrosome. In terms of biological role, assembles a suppression complex (suppresome) by tethering SIRT1 and MDM2 to regulate composite modifications of p53/TP53. Confers both deacetylation-mediated functional inactivation, by SIRT1, and ubiquitination-dependent degradation, by MDM2, of p53/TP53, promoting a proliferative and cell survival behaviors. May play a role in the regulation of spermatogenesis. This is MORN repeat-containing protein 3 (morn3) from Xenopus laevis (African clawed frog).